Consider the following 248-residue polypeptide: 4-hydroxy-tetrahydrodipicolinate reductase (248 aa).

NAD(+) is bound by residues 8–13 (GAKGRV), aspartate 34, 76–78 (GTT), and 103–106 (APNF). Histidine 133 serves as the catalytic Proton donor/acceptor. Residue histidine 134 participates in (S)-2,3,4,5-tetrahydrodipicolinate binding. Catalysis depends on lysine 137, which acts as the Proton donor. 143-144 (GT) serves as a coordination point for (S)-2,3,4,5-tetrahydrodipicolinate.

It belongs to the DapB family.

The protein localises to the cytoplasm. It carries out the reaction (S)-2,3,4,5-tetrahydrodipicolinate + NAD(+) + H2O = (2S,4S)-4-hydroxy-2,3,4,5-tetrahydrodipicolinate + NADH + H(+). The catalysed reaction is (S)-2,3,4,5-tetrahydrodipicolinate + NADP(+) + H2O = (2S,4S)-4-hydroxy-2,3,4,5-tetrahydrodipicolinate + NADPH + H(+). The protein operates within amino-acid biosynthesis; L-lysine biosynthesis via DAP pathway; (S)-tetrahydrodipicolinate from L-aspartate: step 4/4. Catalyzes the conversion of 4-hydroxy-tetrahydrodipicolinate (HTPA) to tetrahydrodipicolinate. This is 4-hydroxy-tetrahydrodipicolinate reductase from Corynebacterium urealyticum (strain ATCC 43042 / DSM 7109).